A 71-amino-acid chain; its full sequence is Cell division protein ZapB (71 aa).

A coiled-coil region spans residues 5-67 (LEVLEQLESK…RALLGKMDQM (63 aa)).

It belongs to the ZapB family. Homodimer. The ends of the coiled-coil dimer bind to each other, forming polymers. Interacts with FtsZ.

The protein localises to the cytoplasm. Non-essential, abundant cell division factor that is required for proper Z-ring formation. It is recruited early to the divisome by direct interaction with FtsZ, stimulating Z-ring assembly and thereby promoting cell division earlier in the cell cycle. Its recruitment to the Z-ring requires functional FtsA or ZipA. This is Cell division protein ZapB from Aeromonas hydrophila subsp. hydrophila (strain ATCC 7966 / DSM 30187 / BCRC 13018 / CCUG 14551 / JCM 1027 / KCTC 2358 / NCIMB 9240 / NCTC 8049).